The chain runs to 689 residues: Glycine--tRNA ligase beta subunit (689 aa).

This sequence belongs to the class-II aminoacyl-tRNA synthetase family. As to quaternary structure, tetramer of two alpha and two beta subunits.

The protein localises to the cytoplasm. The catalysed reaction is tRNA(Gly) + glycine + ATP = glycyl-tRNA(Gly) + AMP + diphosphate. The protein is Glycine--tRNA ligase beta subunit of Klebsiella pneumoniae subsp. pneumoniae (strain ATCC 700721 / MGH 78578).